A 569-amino-acid chain; its full sequence is Probable santalene synthase (569 aa).

Arg284, Asp321, Asp325, Arg460, and Asn463 together coordinate (2E)-geranyl diphosphate. Mg(2+) contacts are provided by Asp321 and Asp325. The DDXXD motif motif lies at 321–325 (DDAYD). Asn463, Thr467, and Glu471 together coordinate Mg(2+).

Belongs to the terpene synthase family. Tpsb subfamily. It depends on Mg(2+) as a cofactor. Mn(2+) serves as cofactor.

Catalyzes the formation of santalene. The sequence is that of Probable santalene synthase (SSY) from Santalum murrayanum (Bitter quandong).